A 367-amino-acid polypeptide reads, in one-letter code: Glutamate 5-kinase (367 aa).

Residue Lys-8 participates in ATP binding. Ser-49, Asp-136, and Asn-148 together coordinate substrate. Residues 168–169 (TD) and 210–216 (TGGMATK) each bind ATP. Positions 275–353 (TGKLLLDAGA…DQIVQILGYE (79 aa)) constitute a PUA domain.

The protein belongs to the glutamate 5-kinase family.

Its subcellular location is the cytoplasm. It catalyses the reaction L-glutamate + ATP = L-glutamyl 5-phosphate + ADP. Its pathway is amino-acid biosynthesis; L-proline biosynthesis; L-glutamate 5-semialdehyde from L-glutamate: step 1/2. In terms of biological role, catalyzes the transfer of a phosphate group to glutamate to form L-glutamate 5-phosphate. This chain is Glutamate 5-kinase, found in Synechococcus elongatus (strain ATCC 33912 / PCC 7942 / FACHB-805) (Anacystis nidulans R2).